We begin with the raw amino-acid sequence, 248 residues long: tRNA (guanine-N(7)-)-methyltransferase (248 aa).

Residues Glu-80, Glu-105, Asp-132, and Asp-155 each coordinate S-adenosyl-L-methionine. Asp-155 is an active-site residue. Substrate contacts are provided by residues Lys-159, Asp-191, and 223–226 (TKFE).

Belongs to the class I-like SAM-binding methyltransferase superfamily. TrmB family.

It carries out the reaction guanosine(46) in tRNA + S-adenosyl-L-methionine = N(7)-methylguanosine(46) in tRNA + S-adenosyl-L-homocysteine. It participates in tRNA modification; N(7)-methylguanine-tRNA biosynthesis. In terms of biological role, catalyzes the formation of N(7)-methylguanine at position 46 (m7G46) in tRNA. The polypeptide is tRNA (guanine-N(7)-)-methyltransferase (Nocardioides sp. (strain ATCC BAA-499 / JS614)).